The chain runs to 387 residues: Chaperone protein DnaJ (387 aa).

The J domain maps to 6–70; that stretch reads DYYEILGLSR…EKRAQYDRFG (65 aa). A CR-type zinc finger spans residues 130-212; that stretch reads GVRKDIDVPR…CSGTGRVRNT (83 aa). 8 residues coordinate Zn(2+): Cys143, Cys146, Cys160, Cys163, Cys186, Cys189, Cys200, and Cys203. 4 CXXCXGXG motif repeats span residues 143-150, 160-167, 186-193, and 200-207; these read CSNCSGTG, CPTCGGTG, CSTCRGKG, and CPVCSGTG. The disordered stretch occupies residues 143–162; sequence CSNCSGTGARPGTSPKRCPT.

Belongs to the DnaJ family. Homodimer. Zn(2+) serves as cofactor.

It is found in the cytoplasm. Its function is as follows. Participates actively in the response to hyperosmotic and heat shock by preventing the aggregation of stress-denatured proteins and by disaggregating proteins, also in an autonomous, DnaK-independent fashion. Unfolded proteins bind initially to DnaJ; upon interaction with the DnaJ-bound protein, DnaK hydrolyzes its bound ATP, resulting in the formation of a stable complex. GrpE releases ADP from DnaK; ATP binding to DnaK triggers the release of the substrate protein, thus completing the reaction cycle. Several rounds of ATP-dependent interactions between DnaJ, DnaK and GrpE are required for fully efficient folding. Also involved, together with DnaK and GrpE, in the DNA replication of plasmids through activation of initiation proteins. This chain is Chaperone protein DnaJ, found in Methanosarcina thermophila.